The primary structure comprises 671 residues: DNA ligase (671 aa).

Residues 32-36, 81-82, and glutamate 113 contribute to the NAD(+) site; these read DAEYD and SL. The N6-AMP-lysine intermediate role is filled by lysine 115. NAD(+) is bound by residues arginine 136, glutamate 173, lysine 290, and lysine 314. Cysteine 408, cysteine 411, cysteine 426, and cysteine 432 together coordinate Zn(2+). The BRCT domain occupies 593 to 671; sequence EIDSPFAGKT…EAEMLRLLGS (79 aa).

Belongs to the NAD-dependent DNA ligase family. LigA subfamily. The cofactor is Mg(2+). Requires Mn(2+) as cofactor.

The catalysed reaction is NAD(+) + (deoxyribonucleotide)n-3'-hydroxyl + 5'-phospho-(deoxyribonucleotide)m = (deoxyribonucleotide)n+m + AMP + beta-nicotinamide D-nucleotide.. Its function is as follows. DNA ligase that catalyzes the formation of phosphodiester linkages between 5'-phosphoryl and 3'-hydroxyl groups in double-stranded DNA using NAD as a coenzyme and as the energy source for the reaction. It is essential for DNA replication and repair of damaged DNA. The polypeptide is DNA ligase (Shigella boydii serotype 4 (strain Sb227)).